Reading from the N-terminus, the 394-residue chain is Zinc-regulated GTPase metalloprotein activator 1 (394 aa).

A psi-PxLVp motif motif is present at residues 16 to 23; that stretch reads EDCPELVP. 48 to 55 contributes to the GTP binding site; it reads GYLGAGKT. Cysteine 106, cysteine 108, and cysteine 109 together coordinate Zn(2+). The short motif at 106-109 is the CXCC motif element; the sequence is CLCC. Residues 109 to 113 and 202 to 205 each bind GTP; these read CSVKD and NKTD. The 104-residue stretch at 272–375 folds into the CobW C-terminal domain; it reads IVTVTFDVPG…ILQQLFITAV (104 aa).

Belongs to the SIMIBI class G3E GTPase family. ZNG1 subfamily.

It localises to the nucleus. It carries out the reaction GTP + H2O = GDP + phosphate + H(+). In terms of biological role, zinc chaperone that directly transfers zinc cofactor to target metalloproteins, thereby activating them. Catalyzes zinc insertion into the active site of methionine aminopeptidase METAP1, which function to cleave the initiator methionine from polypeptides during or after protein translation. Mechanistically, the N-terminal psi-PxLVp motif binds to the C6H2-type zinc finger of inactive form of METAP1. After formation of the docked complex, zinc is transferred from the CXCC motif in the GTPase domain of ZNG1 to the zinc binding site in the peptidase domain of METAP1 in a process requiring GTP hydrolysis. GTP/GDP exchange is required for release of active METAP1. This is Zinc-regulated GTPase metalloprotein activator 1 (Zng1) from Rattus norvegicus (Rat).